The primary structure comprises 114 residues: Large ribosomal subunit protein bL20 (114 aa).

This sequence belongs to the bacterial ribosomal protein bL20 family.

In terms of biological role, binds directly to 23S ribosomal RNA and is necessary for the in vitro assembly process of the 50S ribosomal subunit. It is not involved in the protein synthesizing functions of that subunit. This chain is Large ribosomal subunit protein bL20, found in Flavobacterium psychrophilum (strain ATCC 49511 / DSM 21280 / CIP 103535 / JIP02/86).